Reading from the N-terminus, the 303-residue chain is Eukaryotic translation initiation factor 3 subunit G (303 aa).

Disordered stretches follow at residues methionine 1–valine 32, glycine 81–asparagine 100, proline 105–lysine 126, and glycine 181–lysine 215. The span at tryptophan 109–lysine 126 shows a compositional bias: basic and acidic residues. Residues alanine 223–lysine 301 enclose the RRM domain.

The protein belongs to the eIF-3 subunit G family. In terms of assembly, component of the eukaryotic translation initiation factor 3 (eIF-3) complex.

It localises to the cytoplasm. In terms of biological role, RNA-binding component of the eukaryotic translation initiation factor 3 (eIF-3) complex, which is involved in protein synthesis of a specialized repertoire of mRNAs and, together with other initiation factors, stimulates binding of mRNA and methionyl-tRNAi to the 40S ribosome. The eIF-3 complex specifically targets and initiates translation of a subset of mRNAs involved in cell proliferation. This subunit can bind 18S rRNA. The polypeptide is Eukaryotic translation initiation factor 3 subunit G (Pyricularia oryzae (strain 70-15 / ATCC MYA-4617 / FGSC 8958) (Rice blast fungus)).